Here is a 491-residue protein sequence, read N- to C-terminus: UDP-N-acetylmuramate--L-alanine ligase (491 aa).

126-132 (GTHGKTT) provides a ligand contact to ATP.

This sequence belongs to the MurCDEF family.

Its subcellular location is the cytoplasm. It catalyses the reaction UDP-N-acetyl-alpha-D-muramate + L-alanine + ATP = UDP-N-acetyl-alpha-D-muramoyl-L-alanine + ADP + phosphate + H(+). It participates in cell wall biogenesis; peptidoglycan biosynthesis. Cell wall formation. In Photorhabdus laumondii subsp. laumondii (strain DSM 15139 / CIP 105565 / TT01) (Photorhabdus luminescens subsp. laumondii), this protein is UDP-N-acetylmuramate--L-alanine ligase.